Consider the following 211-residue polypeptide: ATP phosphoribosyltransferase (211 aa).

The protein belongs to the ATP phosphoribosyltransferase family. Short subfamily. In terms of assembly, heteromultimer composed of HisG and HisZ subunits.

It is found in the cytoplasm. The enzyme catalyses 1-(5-phospho-beta-D-ribosyl)-ATP + diphosphate = 5-phospho-alpha-D-ribose 1-diphosphate + ATP. It functions in the pathway amino-acid biosynthesis; L-histidine biosynthesis; L-histidine from 5-phospho-alpha-D-ribose 1-diphosphate: step 1/9. In terms of biological role, catalyzes the condensation of ATP and 5-phosphoribose 1-diphosphate to form N'-(5'-phosphoribosyl)-ATP (PR-ATP). Has a crucial role in the pathway because the rate of histidine biosynthesis seems to be controlled primarily by regulation of HisG enzymatic activity. The sequence is that of ATP phosphoribosyltransferase from Pseudomonas putida (strain GB-1).